Reading from the N-terminus, the 922-residue chain is Translation initiation factor IF-2 (922 aa).

The tract at residues Lys33 to Glu310 is disordered. A compositionally biased stretch (low complexity) spans Pro75–Pro87. 2 stretches are compositionally biased toward pro residues: residues Gly88–Gln98 and Thr140–Lys150. Composition is skewed to low complexity over residues Pro151–Pro169 and Pro202–Lys211. Composition is skewed to gly residues over residues Lys215–Arg225 and Phe248–Gly292. The segment covering Arg296–Lys305 has biased composition (basic residues). The region spanning Gln418 to Asp590 is the tr-type G domain. The interval Gly427–Thr434 is G1. Position 427-434 (Gly427–Thr434) interacts with GTP. Residues Gly452 to His456 are G2. Residues Asp477–Gly480 form a G3 region. GTP contacts are provided by residues Asp477–His481 and Asn531–Asp534. Residues Asn531 to Asp534 are G4. Positions Ser567–Lys569 are G5.

It belongs to the TRAFAC class translation factor GTPase superfamily. Classic translation factor GTPase family. IF-2 subfamily.

Its subcellular location is the cytoplasm. Its function is as follows. One of the essential components for the initiation of protein synthesis. Protects formylmethionyl-tRNA from spontaneous hydrolysis and promotes its binding to the 30S ribosomal subunits. Also involved in the hydrolysis of GTP during the formation of the 70S ribosomal complex. This chain is Translation initiation factor IF-2, found in Corynebacterium jeikeium (strain K411).